Reading from the N-terminus, the 261-residue chain is uncharacterized protein (261 aa).

The N-terminal stretch at 1–22 is a signal peptide; the sequence is MRDSKRVVLYISIIVLSIFIIG. The N-palmitoyl cysteine moiety is linked to residue cysteine 23. Residue cysteine 23 is the site of S-diacylglycerol cysteine attachment.

This sequence belongs to the staphylococcal tandem lipoprotein family.

It localises to the cell membrane. This is an uncharacterized protein from Staphylococcus aureus (strain Mu50 / ATCC 700699).